The chain runs to 78 residues: D-alanyl carrier protein (78 aa).

The Carrier domain maps to 1-78 (MEFKQEVLDV…NIVNKLTELK (78 aa)). At Ser-36 the chain carries O-(pantetheine 4'-phosphoryl)serine.

Belongs to the DltC family. In terms of processing, 4'-phosphopantetheine is transferred from CoA to a specific serine of apo-DCP.

Its subcellular location is the cytoplasm. Its pathway is cell wall biogenesis; lipoteichoic acid biosynthesis. Its function is as follows. Carrier protein involved in the D-alanylation of lipoteichoic acid (LTA). The loading of thioester-linked D-alanine onto DltC is catalyzed by D-alanine--D-alanyl carrier protein ligase DltA. The DltC-carried D-alanyl group is further transferred to cell membrane phosphatidylglycerol (PG) by forming an ester bond, probably catalyzed by DltD. D-alanylation of LTA plays an important role in modulating the properties of the cell wall in Gram-positive bacteria, influencing the net charge of the cell wall. The chain is D-alanyl carrier protein from Bacillus velezensis (strain DSM 23117 / BGSC 10A6 / LMG 26770 / FZB42) (Bacillus amyloliquefaciens subsp. plantarum).